The primary structure comprises 314 residues: GTPase Era (314 aa).

In terms of domain architecture, Era-type G spans 21–189 (KSGFVGIIGR…QNTLIEQLEP (169 aa)). Residues 29–36 (GRPNVGKS) are G1. Residue 29 to 36 (GRPNVGKS) participates in GTP binding. A G2 region spans residues 55-59 (QTTRN). The interval 76–79 (DTPG) is G3. Residues 76–80 (DTPGI) and 138–141 (NKSD) each bind GTP. Residues 138–141 (NKSD) form a G4 region. Positions 168 to 170 (FSA) are G5. The 85-residue stretch at 212–296 (IREQILQLTR…FLKLFVKVEP (85 aa)) folds into the KH type-2 domain.

Belongs to the TRAFAC class TrmE-Era-EngA-EngB-Septin-like GTPase superfamily. Era GTPase family. Monomer.

The protein localises to the cytoplasm. The protein resides in the cell inner membrane. Its function is as follows. An essential GTPase that binds both GDP and GTP, with rapid nucleotide exchange. Plays a role in 16S rRNA processing and 30S ribosomal subunit biogenesis and possibly also in cell cycle regulation and energy metabolism. This Crocosphaera subtropica (strain ATCC 51142 / BH68) (Cyanothece sp. (strain ATCC 51142)) protein is GTPase Era.